Consider the following 564-residue polypeptide: 2-succinyl-5-enolpyruvyl-6-hydroxy-3-cyclohexene-1-carboxylate synthase (564 aa).

The protein belongs to the TPP enzyme family. MenD subfamily. Homodimer. Requires Mg(2+) as cofactor. It depends on Mn(2+) as a cofactor. Thiamine diphosphate serves as cofactor.

The catalysed reaction is isochorismate + 2-oxoglutarate + H(+) = 5-enolpyruvoyl-6-hydroxy-2-succinyl-cyclohex-3-ene-1-carboxylate + CO2. The protein operates within quinol/quinone metabolism; 1,4-dihydroxy-2-naphthoate biosynthesis; 1,4-dihydroxy-2-naphthoate from chorismate: step 2/7. Its pathway is quinol/quinone metabolism; menaquinone biosynthesis. Catalyzes the thiamine diphosphate-dependent decarboxylation of 2-oxoglutarate and the subsequent addition of the resulting succinic semialdehyde-thiamine pyrophosphate anion to isochorismate to yield 2-succinyl-5-enolpyruvyl-6-hydroxy-3-cyclohexene-1-carboxylate (SEPHCHC). The chain is 2-succinyl-5-enolpyruvyl-6-hydroxy-3-cyclohexene-1-carboxylate synthase from Photorhabdus laumondii subsp. laumondii (strain DSM 15139 / CIP 105565 / TT01) (Photorhabdus luminescens subsp. laumondii).